The sequence spans 302 residues: Trans-4-hydroxy-L-proline dehydratase activating enzyme (302 aa).

The Radical SAM core domain occupies 14 to 297 (HDGPGIRSTV…KRLFEASNFN (284 aa)). Residues cysteine 28, cysteine 32, cysteine 35, cysteine 54, cysteine 57, cysteine 60, and cysteine 93 each contribute to the [4Fe-4S] cluster site. 34–36 (WCH) serves as a coordination point for S-adenosyl-L-methionine. 4Fe-4S ferredoxin-type domains lie at 45-74 (KQVL…KGET) and 75-103 (KICL…IVGQ). S-adenosyl-L-methionine-binding positions include glycine 133, 183–185 (DIK), and histidine 257.

Belongs to the organic radical-activating enzymes family. The cofactor is [4Fe-4S] cluster.

It catalyses the reaction glycyl-[protein] + reduced [flavodoxin] + S-adenosyl-L-methionine = glycin-2-yl radical-[protein] + semiquinone [flavodoxin] + 5'-deoxyadenosine + L-methionine + H(+). Catalyzes activation of the trans-4-hydroxy-L-proline dehydratase under anaerobic conditions by generation of an organic free radical on a glycine residue, via a homolytic cleavage of S-adenosyl-L-methionine (SAM). Is involved in the anaerobic degradation of 4-hydroxyproline. This Clostridioides difficile (Peptoclostridium difficile) protein is Trans-4-hydroxy-L-proline dehydratase activating enzyme.